The following is a 131-amino-acid chain: Small ribosomal subunit protein uS8 (131 aa).

This sequence belongs to the universal ribosomal protein uS8 family. As to quaternary structure, part of the 30S ribosomal subunit. Contacts proteins S5 and S12.

Functionally, one of the primary rRNA binding proteins, it binds directly to 16S rRNA central domain where it helps coordinate assembly of the platform of the 30S subunit. The chain is Small ribosomal subunit protein uS8 from Shewanella amazonensis (strain ATCC BAA-1098 / SB2B).